Reading from the N-terminus, the 2184-residue chain is MGAQVSTQKTGAHETSLSATGNSIIHYTNINYYKDAASNSANRQDFTQDPGKFTEPMKDVMIKTLPALNSPTVEECGYSDRVRSITLGNSTITTQECANVVVGYGEWPEYLSDNEATAEDQPTQPDVATCRFYTLDSVQWENGSPGWWWKFPDALRDMGLFGQNMYYHYLGRAGYTIHVQCNASKFHQGCILVVCVPEAEMGSAQTSGVVNYEHISKGEIASRFTTTTTAEDHGVQAAVWNAGMGVGVGNLTIFPHQWINLRTNNSATIVMPYVNSVPMDNMYRHHNFTLMIIPFVPLDFSAGASTYVPITVTVAPMCAEYNGLRLAGHQGLPTMNTPGSNQFLTSDDFQSPSAMPQFDVTPEMHIPGEVRNLMEIAEVDSVMPINNDSAAKVSSMEAYRVELSTNTNAGTQVFGFQLNPGAESVMNRTLMGEILNYYAHWSGSIKITFVFCGSAMTTGKFLLSYAPPGAGAPKTRKDAMLGTHVVWDVGLQSSCVLCIPWISQTHYRFVEKDPYTNAGFVTCWYQTSVVSPASNQPKCYMMCMVSACNDFSVRMLRDTKFIEQTSFYQGDVQNAVEGAMVRVADTVQTSATNSERVPNLTAVETGHTSQAVPGDTMQTRHVINNHVRSESTIENFLARSACVFYLEYKTGTKEDSNSFNNWVITTRRVAQLRRKLEMFTYLRFDMEITVVITSSQDQSTSQNQNAPVLTHQIMYVPPGGPIPVSVDDYSWQTSTNPSIFWTEGNAPARMSIPFISIGNAYSNFYDGWSHFSQAGVYGFTTLNNMGQLFFRHVNKPNPAAITSVARIYFKPKHVRAWVPRPPRLCPYINSTNVNFEPKPVTEVRTNIITTGAFGQQSGAVYVGNYRVVNRHLATHIDWQNCVWEDYNRDLLVSTTTAHGCDTIARCQCTTGVYFCLSRNKHYPVSFEGPGLVEVQESEYYPKRYQSHVLLAAGFSEPGDCGGILRCEHGVIGIVTMGGEGVVGFADVRDLLWLEDDAMEQGVKDYVEQLGNAFGSGFTNQICEQVNLLKESLVGQDSILEKSLKALVKIISALVIVVRNHDDLITVTATLALIGCTSSPWRWLKQKVSQYYGIPMAERQNNGWLKKFTEMTNACKGMEWIAIKIQKFIEWLKVKILPEVKEKHEFLNRLKQLPLLESQIATIEQSAPSQGDQEQLFSNVQYFAHYCRKYAPLYAAEAKRVFSLEKKMSNYIQFKSKCRIEPVCLLLHGSPGAGKSVATNLIGRSLAEKLNSSVYSLPPDPDHFDGYKQQAVVIMDDLCQNPDGKDVSLFCQMVSSVDFVPPMAALEEKGILFTSPFVLASTNAGSINAPTVSDSRALARRFHFDMNIEVISMYSQNGKINMPMSVKTCDEDCCPVNFKKCCPLVCGKAIQFIDRKTQVRYSLDMLVTEMFREYNHRHSVGATLEALFQGPPVYREIKISVAPETPPPPAIADLLKSVDSEAVREYCKEKGWLVPEISSTLQIEKHVSRAFICLQALTTFVSVAGIIYIIYKLFAGFQGAYTGMPNQKPKVPTLRQAKVQGPAFEFAVAMMKRNASTVKTEYGEFTMLGIYDRWAVLPRHAKPGPTILMNDQEVGVLDAKELVDKDGTNLELTLLKLNRNEKFRDIRGFLAREEAEVNEAVLAINTSKFPNMYIPVGQVTDYGFLNLGGTPTKRMLMYNFPTRAGQCGGVLMSTGKVLGIHVGGNGHQGFSAALLRHYFNEEQGEIEFIESSKDAGFPVINTPSKTKLEPSVFHQVFEGNKEPAVLRNGDPRLKVNFEEAIFSKYIGNVNTHVDEYMQEAVDHYAGQLATLDISTEPMKLEDAVYGTEGLEALDLTTSAGYPYVALGIKKRDILSKKTKDLTKLKECMDKYGLNLPMVTYVKDELRSAEKVAKGKSRLIEASSLNDSVAMRQTFGNLYKTFHLNPGIVTGSAVGCDPDVFWSKIPVMLDGHLIAFDYSGYDASLSPVWFACLKLLLEKLGYTNKETNYIDYLCNSHHLYRDKHYFVRGGMPSGCSGTSIFNSMINNIIIRTLMLKVYKGIDLDQFRMIAYGDDVIASYPWPIDASLLAEAGKDYGLIMTPADKGECFNEVTWTNVTFLKRYFRADEQYPFLVHPVMPMKDIHESIRWTKDPKNTQDHVRSLCLLAWHNGEHEYEEFIRKIRSVPVGRCLTLPAFSTLRRKWLDSF.

Gly-2 carries N-myristoyl glycine; by host lipidation. At 2–1494 the chain is on the cytoplasmic side; the sequence is GAQVSTQKTG…HVSRAFICLQ (1493 aa). The interval 567 to 583 is amphipathic alpha-helix; the sequence is FYQGDVQNAVEGAMVRV. Residues His-871 and Asp-889 each act as for protease 2A activity in the active site. Positions 906 and 908 each coordinate Zn(2+). The active-site For protease 2A activity is the Cys-960. Zn(2+) is bound by residues Cys-966 and His-968. The membrane-binding stretch occupies residues 1100 to 1172; sequence NNGWLKKFTE…EQSAPSQGDQ (73 aa). An oligomerization region spans residues 1100 to 1238; the sequence is NNGWLKKFTE…SPGAGKSVAT (139 aa). The interval 1121-1125 is RNA-binding; that stretch reads AIKIQ. The region spanning 1204-1360 is the SF3 helicase domain; it reads EKKMSNYIQF…SMYSQNGKIN (157 aa). The Zn(2+) site is built by Cys-1368, Cys-1380, and Cys-1385. The segment at 1368 to 1385 adopts a C4-type; degenerate zinc-finger fold; sequence CDEDCCPVNFKKCCPLVC. Residues 1412–1419 form an RNA-binding region; that stretch reads EYNHRHSV. The tract at residues 1423–1428 is oligomerization; that stretch reads LEALFQ. The stretch at 1495 to 1510 is an intramembrane region; it reads ALTTFVSVAGIIYIIY. At 1511–2184 the chain is on the cytoplasmic side; that stretch reads KLFAGFQGAY…TLRRKWLDSF (674 aa). Residue Tyr-1520 is modified to O-(5'-phospho-RNA)-tyrosine. In terms of domain architecture, Peptidase C3 spans 1540-1718; it reads GPAFEFAVAM…FSAALLRHYF (179 aa). Catalysis depends on for protease 3C activity residues His-1579, Glu-1610, and Cys-1686. A RdRp catalytic domain is found at 1949-2065; that stretch reads GHLIAFDYSG…SYPWPIDASL (117 aa). The Mg(2+) site is built by Asp-1955 and Asp-2051.

The protein belongs to the picornaviruses polyprotein family. As to quaternary structure, interacts with capsid protein VP1 and capsid protein VP3 to form heterotrimeric protomers. Interacts with capsid protein VP0, and capsid protein VP3 to form heterotrimeric protomers. Five protomers subsequently associate to form pentamers which serve as building blocks for the capsid. Interacts with capsid protein VP2, capsid protein VP3 and capsid protein VP4 following cleavage of capsid protein VP0. In terms of assembly, interacts with capsid protein VP1 and capsid protein VP3 in the mature capsid. As to quaternary structure, interacts with capsid protein VP0 and capsid protein VP1 to form heterotrimeric protomers. Five protomers subsequently associate to form pentamers which serve as building blocks for the capsid. Interacts with capsid protein VP4 in the mature capsid. Interacts with protein 2C; this interaction may be important for virion morphogenesis. Interacts with capsid protein VP1 and capsid protein VP3. In terms of assembly, homodimer. As to quaternary structure, homohexamer; forms a hexameric ring structure with 6-fold symmetry characteristic of AAA+ ATPases. Interacts (via N-terminus) with host RTN3 (via reticulon domain); this interaction is important for viral replication. Interacts with capsid protein VP3; this interaction may be important for virion morphogenesis. Interacts with protein 3CD. In terms of assembly, homodimer. Interacts with host GBF1. Interacts (via GOLD domain) with host ACBD3 (via GOLD domain); this interaction allows the formation of a viral protein 3A/ACBD3 heterotetramer with a 2:2 stoichiometry, which will stimulate the recruitment of host PI4KB in order to synthesize PI4P at the viral RNA replication sites. As to quaternary structure, interacts with RNA-directed RNA polymerase. Interacts with protein 3AB and with RNA-directed RNA polymerase. In terms of assembly, interacts with Viral protein genome-linked and with protein 3CD. The cofactor is Mg(2+). In terms of processing, specific enzymatic cleavages in vivo by the viral proteases yield processing intermediates and the mature proteins. Post-translationally, myristoylation is required for the formation of pentamers during virus assembly. Further assembly of 12 pentamers and a molecule of genomic RNA generates the provirion. During virion maturation, immature virions are rendered infectious following cleavage of VP0 into VP4 and VP2. This maturation seems to be an autocatalytic event triggered by the presence of RNA in the capsid and it is followed by a conformational change infectious virion. In terms of processing, myristoylation is required during RNA encapsidation and formation of the mature virus particle. Post-translationally, VPg is uridylylated by the polymerase into VPg-pUpU. This acts as a nucleotide-peptide primer for the genomic RNA replication.

It is found in the virion. Its subcellular location is the host cytoplasm. The protein resides in the host cytoplasmic vesicle membrane. It localises to the host nucleus. It catalyses the reaction a ribonucleoside 5'-triphosphate + H2O = a ribonucleoside 5'-diphosphate + phosphate + H(+). The catalysed reaction is Selective cleavage of Tyr-|-Gly bond in the picornavirus polyprotein.. It carries out the reaction RNA(n) + a ribonucleoside 5'-triphosphate = RNA(n+1) + diphosphate. The enzyme catalyses Selective cleavage of Gln-|-Gly bond in the poliovirus polyprotein. In other picornavirus reactions Glu may be substituted for Gln, and Ser or Thr for Gly.. Its activity is regulated as follows. Replication or transcription is subject to high level of random mutations by the nucleotide analog ribavirin. Functionally, forms an icosahedral capsid of pseudo T=3 symmetry with capsid proteins VP2 and VP3. The capsid is 300 Angstroms in diameter, composed of 60 copies of each capsid protein and enclosing the viral positive strand RNA genome. Capsid protein VP1 mainly forms the vertices of the capsid. Capsid protein VP1 interacts with host ITGA2/ITGB1 to provide virion attachment to target host cells. This attachment induces virion internalization predominantly through caveolin-mediated endocytosis. Tyrosine kinases are probably involved in the entry process. After binding to its receptor, the capsid undergoes conformational changes. Capsid protein VP1 N-terminus (that contains an amphipathic alpha-helix) and capsid protein VP4 are externalized. Together, they shape a pore in the host membrane through which viral genome is translocated to host cell cytoplasm. Its function is as follows. Forms an icosahedral capsid of pseudo T=3 symmetry with capsid proteins VP2 and VP3. The capsid is 300 Angstroms in diameter, composed of 60 copies of each capsid protein and enclosing the viral positive strand RNA genome. In terms of biological role, lies on the inner surface of the capsid shell. After binding to the host receptor, the capsid undergoes conformational changes. Capsid protein VP4 is released, Capsid protein VP1 N-terminus is externalized, and together, they shape a pore in the host membrane through which the viral genome is translocated into the host cell cytoplasm. Component of immature procapsids, which is cleaved into capsid proteins VP4 and VP2 after maturation. Allows the capsid to remain inactive before the maturation step. Functionally, cysteine protease that cleaves viral polyprotein and specific host proteins. It is responsible for the autocatalytic cleavage between the P1 and P2 regions, which is the first cleavage occurring in the polyprotein. Also cleaves the host translation initiation factor EIF4G1, in order to shut down the capped cellular mRNA translation. Inhibits the host nucleus-cytoplasm protein and RNA trafficking by cleaving host members of the nuclear pores. Counteracts stress granule formation probably by antagonizing its assembly or promoting its dissassembly. Its function is as follows. Plays an essential role in the virus replication cycle by acting as a viroporin. Creates a pore in the host endoplasmic reticulum and as a consequence releases Ca2+ in the cytoplasm of infected cell. In turn, high levels of cytoplasmic calcium may trigger membrane trafficking and transport of viral ER-associated proteins to viroplasms, sites of viral genome replication. In terms of biological role, induces and associates with structural rearrangements of intracellular membranes. Displays RNA-binding, nucleotide binding and NTPase activities. May play a role in virion morphogenesis and viral RNA encapsidation by interacting with the capsid protein VP3. Localizes the viral replication complex to the surface of membranous vesicles. Together with protein 3CD binds the Cis-Active RNA Element (CRE) which is involved in RNA synthesis initiation. Acts as a cofactor to stimulate the activity of 3D polymerase, maybe through a nucleid acid chaperone activity. Functionally, localizes the viral replication complex to the surface of membranous vesicles. It inhibits host cell endoplasmic reticulum-to-Golgi apparatus transport and causes the disassembly of the Golgi complex, possibly through GBF1 interaction. This would result in depletion of MHC, trail receptors and IFN receptors at the host cell surface. Plays an essential role in viral RNA replication by recruiting ACBD3 and PI4KB at the viral replication sites, thereby allowing the formation of the rearranged membranous structures where viral replication takes place. Its function is as follows. Acts as a primer for viral RNA replication and remains covalently bound to viral genomic RNA. VPg is uridylylated prior to priming replication into VPg-pUpU. The oriI viral genomic sequence may act as a template for this. The VPg-pUpU is then used as primer on the genomic RNA poly(A) by the RNA-dependent RNA polymerase to replicate the viral genome. During genome replication, the VPg-RNA linkage is removed by the host TDP2, thereby accelerating replication. During the late stage of the replication cycle, host TDP2 is excluded from sites of viral RNA synthesis and encapsidation, allowing for the generation of progeny virions. In terms of biological role, involved in the viral replication complex and viral polypeptide maturation. It exhibits protease activity with a specificity and catalytic efficiency that is different from protease 3C. Protein 3CD lacks polymerase activity. Protein 3CD binds to the 5'UTR of the viral genome. Replicates the viral genomic RNA on the surface of intracellular membranes. May form linear arrays of subunits that propagate along a strong head-to-tail interaction called interface-I. Covalently attaches UMP to a tyrosine of VPg, which is used to prime RNA synthesis. The positive stranded RNA genome is first replicated at virus induced membranous vesicles, creating a dsRNA genomic replication form. This dsRNA is then used as template to synthesize positive stranded RNA genomes. ss(+)RNA genomes are either translated, replicated or encapsidated. Functionally, major viral protease that mediates proteolytic processing of the polyprotein. Cleaves host EIF5B, contributing to host translation shutoff. Also cleaves host PABPC1, contributing to host translation shutoff. Cleaves host NLRP1, triggers host N-glycine-mediated degradation of the autoinhibitory NLRP1 N-terminal fragment. The chain is Genome polyprotein from Homo sapiens (Human).